Here is a 79-residue protein sequence, read N- to C-terminus: D-alanyl carrier protein (79 aa).

The Carrier domain occupies 1–77 (MDIKSEVLKI…KIIEGITELR (77 aa)). S35 bears the O-(pantetheine 4'-phosphoryl)serine mark.

The protein belongs to the DltC family. Post-translationally, 4'-phosphopantetheine is transferred from CoA to a specific serine of apo-DCP.

The protein resides in the cytoplasm. The protein operates within cell wall biogenesis; lipoteichoic acid biosynthesis. Its function is as follows. Carrier protein involved in the D-alanylation of lipoteichoic acid (LTA). The loading of thioester-linked D-alanine onto DltC is catalyzed by D-alanine--D-alanyl carrier protein ligase DltA. The DltC-carried D-alanyl group is further transferred to cell membrane phosphatidylglycerol (PG) by forming an ester bond, probably catalyzed by DltD. D-alanylation of LTA plays an important role in modulating the properties of the cell wall in Gram-positive bacteria, influencing the net charge of the cell wall. This chain is D-alanyl carrier protein, found in Streptococcus mutans serotype c (strain ATCC 700610 / UA159).